The chain runs to 137 residues: Transcription antitermination protein NusB (137 aa).

Belongs to the NusB family.

Involved in transcription antitermination. Required for transcription of ribosomal RNA (rRNA) genes. Binds specifically to the boxA antiterminator sequence of the ribosomal RNA (rrn) operons. The polypeptide is Transcription antitermination protein NusB (Finegoldia magna (strain ATCC 29328 / DSM 20472 / WAL 2508) (Peptostreptococcus magnus)).